Consider the following 244-residue polypeptide: MKVAVILPAAGLGTRMGKGTAEKAGTSRKQFMLLEGSPILMHTVRKFAASPRVGEIVIAVRAEDTEWVREVVTQEFPGGRVRVVAGGNSRQESVENALSSLSPDCELVAVHDAVRPFIDLDIMHAVFDEAAETGAAIVGVPAVDTVKQVTRGTTHVRVRATLPREKLVMAQTPQVFRHDLLLRAFQEARKDGFIGTDESSMVERLDVEVSVVPGSDRNIKITKPTDMELAHLFLREEAARSTLS.

The protein belongs to the IspD/TarI cytidylyltransferase family. IspD subfamily.

It catalyses the reaction 2-C-methyl-D-erythritol 4-phosphate + CTP + H(+) = 4-CDP-2-C-methyl-D-erythritol + diphosphate. The protein operates within isoprenoid biosynthesis; isopentenyl diphosphate biosynthesis via DXP pathway; isopentenyl diphosphate from 1-deoxy-D-xylulose 5-phosphate: step 2/6. Catalyzes the formation of 4-diphosphocytidyl-2-C-methyl-D-erythritol from CTP and 2-C-methyl-D-erythritol 4-phosphate (MEP). The chain is 2-C-methyl-D-erythritol 4-phosphate cytidylyltransferase from Solibacter usitatus (strain Ellin6076).